The primary structure comprises 305 residues: Dihydroorotate dehydrogenase B (NAD(+)), catalytic subunit (305 aa).

Residues Ser-23 and 47-48 (KG) each bind FMN. Residues Lys-47 and 71-75 (NAIGL) each bind substrate. 2 residues coordinate FMN: Asn-101 and Asn-129. Asn-129 is a substrate binding site. Residue Cys-132 is the Nucleophile of the active site. Residues Lys-167 and Ile-193 each coordinate FMN. 194–195 (NT) is a binding site for substrate. FMN is bound by residues Gly-219, 245-246 (GG), and 267-268 (GT).

This sequence belongs to the dihydroorotate dehydrogenase family. Type 1 subfamily. In terms of assembly, heterotetramer of 2 PyrK and 2 PyrD type B subunits. Requires FMN as cofactor.

The protein localises to the cytoplasm. The enzyme catalyses (S)-dihydroorotate + NAD(+) = orotate + NADH + H(+). It functions in the pathway pyrimidine metabolism; UMP biosynthesis via de novo pathway; orotate from (S)-dihydroorotate (NAD(+) route): step 1/1. Functionally, catalyzes the conversion of dihydroorotate to orotate with NAD(+) as electron acceptor. The polypeptide is Dihydroorotate dehydrogenase B (NAD(+)), catalytic subunit (pyrD) (Geotalea daltonii (strain DSM 22248 / JCM 15807 / FRC-32) (Geobacter daltonii)).